The chain runs to 103 residues: Large ribosomal subunit protein bL21 (103 aa).

It belongs to the bacterial ribosomal protein bL21 family. As to quaternary structure, part of the 50S ribosomal subunit. Contacts protein L20.

This protein binds to 23S rRNA in the presence of protein L20. The sequence is that of Large ribosomal subunit protein bL21 from Polynucleobacter asymbioticus (strain DSM 18221 / CIP 109841 / QLW-P1DMWA-1) (Polynucleobacter necessarius subsp. asymbioticus).